Reading from the N-terminus, the 428-residue chain is MFIDTAKIFVKSGDGGHGSVSFRREKYVPLGGPDGGDGGKGGDVTFVVDPGMTTLLDFKYKRKFVAGRGQDGQGSKCYGRDGENLTIKVPMGTIIRDVETNKVMADLSHRDDTYTICRGGKGGKGNCKFCTPTRQAPTFAEPGMPGEERWVALELKLLADVGLLGFPNVGKSTLLSVVTKAKPKIANYHFTTLKPNLGVVAVPGIEPFVMADVPGIIEGASEGVGLGLDFLRHIERTRLLIHVVDISGVEGRDAVEDFKRINEELKNYSVKLWDRPQIVVANKCDMLFDEEIFENFKAEVNKMGFDKVFKMSAATSQGVEEVIKEAARMLKDIPVTDLEIPEDERFIPEDKKFTYTINPIEEDGLKVYVVEGSFVDRLLLAVNVNDPDSLRYFHKVLNNKGIFHELREMGIEDGDMVRLNDFEFEYLL.

Positions 1 to 158 constitute an Obg domain; the sequence is MFIDTAKIFV…RWVALELKLL (158 aa). In terms of domain architecture, OBG-type G spans 159–331; that stretch reads ADVGLLGFPN…VIKEAARMLK (173 aa). GTP-binding positions include 165-172, 190-194, 212-215, 282-285, and 312-314; these read GFPNVGKS, FTTLK, DVPG, NKCD, and SAA. Positions 172 and 192 each coordinate Mg(2+). One can recognise an OCT domain in the interval 345–428; the sequence is RFIPEDKKFT…LNDFEFEYLL (84 aa).

Belongs to the TRAFAC class OBG-HflX-like GTPase superfamily. OBG GTPase family. Monomer. Mg(2+) is required as a cofactor.

It is found in the cytoplasm. Its function is as follows. An essential GTPase which binds GTP, GDP and possibly (p)ppGpp with moderate affinity, with high nucleotide exchange rates and a fairly low GTP hydrolysis rate. Plays a role in control of the cell cycle, stress response, ribosome biogenesis and in those bacteria that undergo differentiation, in morphogenesis control. This Clostridium perfringens (strain ATCC 13124 / DSM 756 / JCM 1290 / NCIMB 6125 / NCTC 8237 / Type A) protein is GTPase Obg.